Here is an 81-residue protein sequence, read N- to C-terminus: ATP synthase subunit c, chloroplastic (81 aa).

The next 2 membrane-spanning stretches (helical) occupy residues 3-23 (PLIS…ASIG) and 57-77 (LAFM…LLFA).

The protein belongs to the ATPase C chain family. As to quaternary structure, F-type ATPases have 2 components, F(1) - the catalytic core - and F(0) - the membrane proton channel. F(1) has five subunits: alpha(3), beta(3), gamma(1), delta(1), epsilon(1). F(0) has four main subunits: a(1), b(1), b'(1) and c(10-14). The alpha and beta chains form an alternating ring which encloses part of the gamma chain. F(1) is attached to F(0) by a central stalk formed by the gamma and epsilon chains, while a peripheral stalk is formed by the delta, b and b' chains.

The protein resides in the plastid. Its subcellular location is the chloroplast thylakoid membrane. F(1)F(0) ATP synthase produces ATP from ADP in the presence of a proton or sodium gradient. F-type ATPases consist of two structural domains, F(1) containing the extramembraneous catalytic core and F(0) containing the membrane proton channel, linked together by a central stalk and a peripheral stalk. During catalysis, ATP synthesis in the catalytic domain of F(1) is coupled via a rotary mechanism of the central stalk subunits to proton translocation. Its function is as follows. Key component of the F(0) channel; it plays a direct role in translocation across the membrane. A homomeric c-ring of between 10-14 subunits forms the central stalk rotor element with the F(1) delta and epsilon subunits. This Pinus koraiensis (Korean pine) protein is ATP synthase subunit c, chloroplastic.